A 184-amino-acid chain; its full sequence is ATP synthase subunit b, chloroplastic (184 aa).

A helical transmembrane segment spans residues 31-49 (IINPSVVLSVLIYFGKGVL).

It belongs to the ATPase B chain family. In terms of assembly, F-type ATPases have 2 components, F(1) - the catalytic core - and F(0) - the membrane proton channel. F(1) has five subunits: alpha(3), beta(3), gamma(1), delta(1), epsilon(1). F(0) has four main subunits: a(1), b(1), b'(1) and c(10-14). The alpha and beta chains form an alternating ring which encloses part of the gamma chain. F(1) is attached to F(0) by a central stalk formed by the gamma and epsilon chains, while a peripheral stalk is formed by the delta, b and b' chains.

It is found in the plastid. The protein resides in the chloroplast thylakoid membrane. In terms of biological role, f(1)F(0) ATP synthase produces ATP from ADP in the presence of a proton or sodium gradient. F-type ATPases consist of two structural domains, F(1) containing the extramembraneous catalytic core and F(0) containing the membrane proton channel, linked together by a central stalk and a peripheral stalk. During catalysis, ATP synthesis in the catalytic domain of F(1) is coupled via a rotary mechanism of the central stalk subunits to proton translocation. Functionally, component of the F(0) channel, it forms part of the peripheral stalk, linking F(1) to F(0). In Pinus koraiensis (Korean pine), this protein is ATP synthase subunit b, chloroplastic.